The primary structure comprises 448 residues: Probable intron-encoded endonuclease bI1 (448 aa).

Residues 1–132 form a cob exon 1 encoded region; that stretch reads MRLLKSHPLL…LMMATAFLGY (132 aa). Transmembrane regions (helical) follow at residues 32 to 52, 86 to 106, and 112 to 132; these read FGSLLACCLIIQIVTGVTLAM, ASAFFFLVYLHIGRGMYYGSY, and LVWAIGTVILILMMATAFLGY. The segment at 133-448 is cob intron 1 encoded; the sequence is QHSPKWFDIS…QWIVEDFSDK (316 aa). The GIY-YIG domain occupies 230-321; that stretch reads DLSGVYMIIN…LKLLVPNYNI (92 aa).

It to endonucleases of group I introns of fungi and phage. Post-translationally, the mature protein may arise from proteolytic cleavage of an in-frame translation of cob exon 1 plus intron 1, containing the bI1 open reading frame.

It localises to the mitochondrion inner membrane. Functionally, mitochondrial DNA endonuclease involved in intron homing. This chain is Probable intron-encoded endonuclease bI1 (bI1), found in Neurospora crassa (strain ATCC 24698 / 74-OR23-1A / CBS 708.71 / DSM 1257 / FGSC 987).